Consider the following 182-residue polypeptide: UPF0149 protein PM1723 (182 aa).

This sequence belongs to the UPF0149 family.

In Pasteurella multocida (strain Pm70), this protein is UPF0149 protein PM1723.